An 890-amino-acid polypeptide reads, in one-letter code: Phosphotransferase RcsD (890 aa).

Topologically, residues 1–21 are cytoplasmic; it reads MRQKETTATTRFSLLPGSITR. The chain crosses the membrane as a helical span at residues 22-42; sequence FFLLLIIVLLVTMGVMVQSAV. At 43-308 the chain is on the periplasmic side; the sequence is NAWLKDKSYQ…GTLLLDTLQN (266 aa). The chain crosses the membrane as a helical span at residues 309-329; it reads ILLPLLLNIGLLALALFGYTT. Residues 330–890 are Cytoplasmic-facing; the sequence is FRHFSSRSTE…DIDSYVKSLL (561 aa). A histidine-like kinase region spans residues 468–678; sequence NIGDALKEPA…RYSVHIKMLA (211 aa). Positions 803 to 890 constitute an HPt domain; that stretch reads AQLHASGYYA…DIDSYVKSLL (88 aa). Position 842 is a phosphohistidine (histidine 842).

This sequence belongs to the RcsD family. Interacts with RcsC and RcsB. Has a higher affinity for RcsB than for RcsC. Post-translationally, phosphorylated by RcsC.

It is found in the cell inner membrane. Functionally, component of the Rcs signaling system, which controls transcription of numerous genes. RcsD is a phosphotransfer intermediate between the sensor kinase RcsC and the response regulator RcsB. It acquires a phosphoryl group from RcsC and transfers it to RcsB. The system controls expression of genes involved in colanic acid capsule synthesis, biofilm formation and cell division. In Escherichia coli (strain K12), this protein is Phosphotransferase RcsD.